A 307-amino-acid chain; its full sequence is Elongation factor Ts (307 aa).

The interval 79 to 82 is involved in Mg(2+) ion dislocation from EF-Tu; it reads TDFV.

Belongs to the EF-Ts family.

It is found in the cytoplasm. Associates with the EF-Tu.GDP complex and induces the exchange of GDP to GTP. It remains bound to the aminoacyl-tRNA.EF-Tu.GTP complex up to the GTP hydrolysis stage on the ribosome. The protein is Elongation factor Ts of Bartonella bacilliformis (strain ATCC 35685 / KC583 / Herrer 020/F12,63).